Reading from the N-terminus, the 59-residue chain is Large ribosomal subunit protein bL32 (59 aa).

This sequence belongs to the bacterial ribosomal protein bL32 family.

The chain is Large ribosomal subunit protein bL32 from Anaeromyxobacter dehalogenans (strain 2CP-C).